Consider the following 120-residue polypeptide: Large ribosomal subunit protein uL14 (120 aa).

It belongs to the universal ribosomal protein uL14 family. Part of the 50S ribosomal subunit. Forms a cluster with proteins L3 and L19. In the 70S ribosome, L14 and L19 interact and together make contacts with the 16S rRNA in bridges B5 and B8.

Functionally, binds to 23S rRNA. Forms part of two intersubunit bridges in the 70S ribosome. The chain is Large ribosomal subunit protein uL14 from Aster yellows witches'-broom phytoplasma (strain AYWB).